The following is a 523-amino-acid chain: Cytochrome P450 CYP82J17 (523 aa).

A helical transmembrane segment spans residues 4-24; that stretch reads FLSQPITIVLAILSVLLYNIW. Residue Cys-462 participates in heme binding.

The protein belongs to the cytochrome P450 family. Mainly expressed in leaves and seed pods and, to a lower extent, in flowers and stems.

It localises to the membrane. Its pathway is steroid metabolism; cholesterol metabolism. Its function is as follows. Involved in the biosynthesis of spiroketal steroid and saponin natural products from cholesterol such as diosgenin and analogs (e.g. furostanol and spirostanol), plant defense compounds used as main precursors for the industrial production of steroid hormones. During the 5,6-spiroketalization of cholesterol, may catalyze the 27-monohydroxylation of furostanol-type steroid to an intermediate product that undergoes a stereospecific formation of the terminal heterocycle to yield diosgenin. The protein is Cytochrome P450 CYP82J17 of Trigonella foenum-graecum (Fenugreek).